A 483-amino-acid chain; its full sequence is Iron-sulfur cluster assembly SufBD family protein ycf24 (483 aa).

The protein belongs to the iron-sulfur cluster assembly SufBD family.

It is found in the plastid. The protein resides in the chloroplast. In Guillardia theta (Cryptophyte), this protein is Iron-sulfur cluster assembly SufBD family protein ycf24 (ycf24).